We begin with the raw amino-acid sequence, 449 residues long: C4-dicarboxylate transport protein 1 (449 aa).

A run of 9 helical transmembrane segments spans residues 14–34, 47–67, 83–103, 157–177, 195–215, 226–246, 312–332, 359–379, and 385–405; these read SIFL…VGIP, FIKL…VNGI, SVIY…VVAY, ILQV…VGEQ, IMGM…AFTT, LGAL…AVLG, FSIY…TPLA, VILA…LVLV, and FMGI…TVTI.

Belongs to the dicarboxylate/amino acid:cation symporter (DAACS) (TC 2.A.23) family.

Its subcellular location is the cell inner membrane. Functionally, responsible for the transport of dicarboxylates such as succinate, fumarate, and malate from the periplasm across the membrane. The chain is C4-dicarboxylate transport protein 1 from Pseudomonas aeruginosa (strain UCBPP-PA14).